Here is a 428-residue protein sequence, read N- to C-terminus: Chaperone SurA (428 aa).

The N-terminal stretch at 1-20 (MKNWKTLLLGIAMIANTSFA) is a signal peptide. 2 PpiC domains span residues 171–272 (STEL…KVND) and 282–382 (VTEV…ELLD).

It is found in the periplasm. The enzyme catalyses [protein]-peptidylproline (omega=180) = [protein]-peptidylproline (omega=0). Functionally, chaperone involved in the correct folding and assembly of outer membrane proteins. Recognizes specific patterns of aromatic residues and the orientation of their side chains, which are found more frequently in integral outer membrane proteins. May act in both early periplasmic and late outer membrane-associated steps of protein maturation. This chain is Chaperone SurA, found in Salmonella paratyphi A (strain ATCC 9150 / SARB42).